Consider the following 320-residue polypeptide: 3-oxoacyl-[acyl-carrier-protein] reductase 1, chloroplastic (320 aa).

The transit peptide at 1 to 60 (MATTVAATKLTSLKAVKKLGFREIRQVRQWSPLQSAMPHFGMLRCGSRQSFATSTVVKAQ) directs the protein to the chloroplast. 82-106 (VTGASRGIGKAIALSLGKAGCKVLV) provides a ligand contact to NADP(+). Ser-214 provides a ligand contact to substrate. The Proton acceptor role is filled by Tyr-227.

The protein belongs to the short-chain dehydrogenases/reductases (SDR) family. Homotetramer.

The protein localises to the plastid. It localises to the chloroplast. The enzyme catalyses a (3R)-hydroxyacyl-[ACP] + NADP(+) = a 3-oxoacyl-[ACP] + NADPH + H(+). Its pathway is lipid metabolism; fatty acid biosynthesis. In Brassica napus (Rape), this protein is 3-oxoacyl-[acyl-carrier-protein] reductase 1, chloroplastic (gbkr1).